A 136-amino-acid chain; its full sequence is ATP synthase epsilon chain (136 aa).

This sequence belongs to the ATPase epsilon chain family. As to quaternary structure, F-type ATPases have 2 components, CF(1) - the catalytic core - and CF(0) - the membrane proton channel. CF(1) has five subunits: alpha(3), beta(3), gamma(1), delta(1), epsilon(1). CF(0) has three main subunits: a, b and c.

It is found in the cellular thylakoid membrane. In terms of biological role, produces ATP from ADP in the presence of a proton gradient across the membrane. This chain is ATP synthase epsilon chain, found in Parasynechococcus marenigrum (strain WH8102).